The following is a 63-amino-acid chain: MAACFVCNKKAVYGKSVTFSAERNSRVFKPNLQSVKIRMPDGSTKRVMVCTKCLKAGKVVKAV.

This sequence belongs to the bacterial ribosomal protein bL28 family.

The sequence is that of Large ribosomal subunit protein bL28 from Hydrogenobaculum sp. (strain Y04AAS1).